Here is a 1698-residue protein sequence, read N- to C-terminus: Bromodomain adjacent to zinc finger domain protein 2A (1698 aa).

Disordered stretches follow at residues 240 to 262 and 352 to 387; these read QSTP…QLPS and VMQE…MTIE. Residues 377-387 are compositionally biased toward polar residues; it reads ENVSQDEMTIE. The 72-residue stretch at 418–489 folds into the MBD domain; that stretch reads IATPEQVCFP…EHFSFSPRMP (72 aa). 2 disordered regions span residues 524–550 and 610–653; these read RGRP…PPKV and EKEE…DRKL. Residues 528–540 are compositionally biased toward basic and acidic residues; sequence RNLEKAKAKEQKA. The segment at residues 541-553 is a DNA-binding region (a.T hook 1); the sequence is KRGRGRPPKVKMI. A coiled-coil region spans residues 579-638; sequence VQLCKLKKKMRRKARNQEAKLEAAKKLKEIKEKEEKKQKIQKAKNQEKAKNQEKKRTRRQ. The segment covering 610 to 632 has biased composition (basic and acidic residues); sequence EKEEKKQKIQKAKNQEKAKNQEK. In terms of domain architecture, DDT spans 701–766; the sequence is SCAFSDCLTT…LQAAMINPGL (66 aa). Disordered stretches follow at residues 884 to 905, 1013 to 1063, 1088 to 1110, and 1123 to 1149; these read ITTT…NDEL, SFGS…PLTN, TVLT…SEAT, and TPCR…TAAT. Residues 890-900 are compositionally biased toward basic and acidic residues; sequence SLRRRSERNAE. 2 stretches are compositionally biased toward polar residues: residues 1023 to 1040 and 1051 to 1063; these read HPRN…SCHC and VTDQ…PLTN. Residues 1091–1108 are compositionally biased toward low complexity; it reads TPESSPPHSESTPIISSE. Over residues 1124 to 1149 the composition is skewed to polar residues; sequence PCRNHNQGLSTHSSNRLSPPSPTAAT. A DNA-binding region (a.T hook 3) is located at residues 1204–1216; it reads EKRRGRRPSKLLK. The PHD-type zinc-finger motif lies at 1476-1526; it reads KVTCLYCRKGDNDELLLLCDSCDRGCHTYCHRPRMNEIPEGDWFCPTCISL. A disordered region spans residues 1549–1587; the sequence is FTEDSPSKPSRRREHPTASQFSPGESPASKKRRMGTRSQ. The region spanning 1585–1689 is the Bromo domain; that stretch reads RSQSPDLTFC…KFYDARWEEF (105 aa).

The protein belongs to the WAL family. Component of the NoRC complex, at least composed of SMARCA5/SNF2H and BAZ2A/TIP5.

The protein localises to the nucleus. It is found in the nucleolus. Essential component of the NoRC (nucleolar remodeling complex) complex, a complex that mediates silencing of a fraction of rDNA by recruiting histone-modifying enzymes and DNA methyltransferases, leading to heterochromatin formation and transcriptional silencing. In the complex, it plays a central role by being recruited to rDNA and by targeting chromatin modifying enzymes such as HDAC1, leading to repress RNA polymerase I transcription. Recruited to rDNA via its interaction with TTF1 and its ability to recognize and bind histone H4 acetylated on 'Lys-16' (H4K16ac), leading to deacetylation of H4K5ac, H4K8ac, H4K12ac but not H4K16ac. Specifically binds pRNAs, 150-250 nucleotide RNAs that are complementary in sequence to the rDNA promoter; pRNA-binding is required for heterochromatin formation and rDNA silencing. In Xenopus laevis (African clawed frog), this protein is Bromodomain adjacent to zinc finger domain protein 2A (baz2a).